Here is a 74-residue protein sequence, read N- to C-terminus: Ferredoxin-like protein in nif region (74 aa).

Residues 2–30 enclose the 4Fe-4S ferredoxin-type domain; that stretch reads PFKIIASQCTSCSACEPLCPNVAISEKGG. The [4Fe-4S] cluster site is built by Cys-10, Cys-13, Cys-16, Cys-20, Cys-39, Cys-51, and Cys-55.

It depends on [4Fe-4S] cluster as a cofactor.

The polypeptide is Ferredoxin-like protein in nif region (frxA) (Bradyrhizobium diazoefficiens (strain JCM 10833 / BCRC 13528 / IAM 13628 / NBRC 14792 / USDA 110)).